The following is a 565-amino-acid chain: Proline--tRNA ligase (565 aa).

It belongs to the class-II aminoacyl-tRNA synthetase family. ProS type 1 subfamily. In terms of assembly, homodimer.

It localises to the cytoplasm. The catalysed reaction is tRNA(Pro) + L-proline + ATP = L-prolyl-tRNA(Pro) + AMP + diphosphate. Its function is as follows. Catalyzes the attachment of proline to tRNA(Pro) in a two-step reaction: proline is first activated by ATP to form Pro-AMP and then transferred to the acceptor end of tRNA(Pro). As ProRS can inadvertently accommodate and process non-cognate amino acids such as alanine and cysteine, to avoid such errors it has two additional distinct editing activities against alanine. One activity is designated as 'pretransfer' editing and involves the tRNA(Pro)-independent hydrolysis of activated Ala-AMP. The other activity is designated 'posttransfer' editing and involves deacylation of mischarged Ala-tRNA(Pro). The misacylated Cys-tRNA(Pro) is not edited by ProRS. The chain is Proline--tRNA ligase from Lactobacillus gasseri (strain ATCC 33323 / DSM 20243 / BCRC 14619 / CIP 102991 / JCM 1131 / KCTC 3163 / NCIMB 11718 / NCTC 13722 / AM63).